Here is a 36-residue protein sequence, read N- to C-terminus: Pancreatic polypeptide (36 aa).

Tyrosine amide is present on Tyr36.

Belongs to the NPY family.

The protein localises to the secreted. Functionally, hormone secreted by pancreatic cells that acts as a regulator of pancreatic and gastrointestinal functions probably by signaling through the G protein-coupled receptor NPY4R2. This chain is Pancreatic polypeptide (PPY), found in Tapirus pinchaque (Mountain tapir).